Reading from the N-terminus, the 175-residue chain is 2-oxo-4-hydroxy-4-carboxy-5-ureidoimidazoline decarboxylase (175 aa).

Catalysis depends on His-67, which acts as the Proton donor. Substrate contacts are provided by residues Pro-68, 84–88 (SRGEQ), and 119–123 (FVICA). A Microbody targeting signal motif is present at residues 173-175 (TKL).

The protein belongs to the OHCU decarboxylase family. As to quaternary structure, homodimer.

It localises to the peroxisome. The catalysed reaction is 5-hydroxy-2-oxo-4-ureido-2,5-dihydro-1H-imidazole-5-carboxylate + H(+) = (S)-allantoin + CO2. Its pathway is purine metabolism; urate degradation; (S)-allantoin from urate: step 3/3. In terms of biological role, catalyzes the stereoselective decarboxylation of 2-oxo-4-hydroxy-4-carboxy-5-ureidoimidazoline (OHCU) to (S)-allantoin. In Amia calva (Bowfin), this protein is 2-oxo-4-hydroxy-4-carboxy-5-ureidoimidazoline decarboxylase (urad).